The primary structure comprises 229 residues: Interleukin-22 receptor subunit alpha-2 (229 aa).

An N-terminal signal peptide occupies residues 1 to 19; the sequence is MPKHCFLGLLIMLLTTATE. 2 consecutive Fibronectin type-III domains span residues 28–127 and 128–229; these read KPQK…TKLD and PPVV…VQIP. A glycan (N-linked (GlcNAc...) asparagine) is linked at N54. 2 disulfide bridges follow: C76/C84 and C204/C225.

The protein belongs to the type II cytokine receptor family.

The protein localises to the secreted. Functionally, receptor for IL22. Binds to IL22, prevents interaction with the functional IL-22R complex and blocks the activity of IL22 (in vitro). May play an important role as an IL22 antagonist in the regulation of inflammatory responses. This is Interleukin-22 receptor subunit alpha-2 (Il22ra2) from Rattus norvegicus (Rat).